The following is a 480-amino-acid chain: Proline--tRNA ligase (480 aa).

The protein belongs to the class-II aminoacyl-tRNA synthetase family. ProS type 3 subfamily. As to quaternary structure, homodimer.

It is found in the cytoplasm. The catalysed reaction is tRNA(Pro) + L-proline + ATP = L-prolyl-tRNA(Pro) + AMP + diphosphate. In terms of biological role, catalyzes the attachment of proline to tRNA(Pro) in a two-step reaction: proline is first activated by ATP to form Pro-AMP and then transferred to the acceptor end of tRNA(Pro). The chain is Proline--tRNA ligase from Chloroflexus aggregans (strain MD-66 / DSM 9485).